Reading from the N-terminus, the 624-residue chain is MPKLRSATSTEGRNMAGARALWRATGVKDNDFGKPIIAIANSFTQFVPGHVHLKDMGSLVASAIEEAGGIAKEFNTIAVDDGIAMGHGGMLYSLPSRELIADSVEYMVNAHCADALVCISNCDKITPGMLMAALRLNIPVVFVSGGPMEAGKTKLSDKLIKLDLVDAMVAGADSNVSDEDSAKIERSACPTCGSCSGMFTANSMNCLTEALGLSLPGNGSMLATHADRRELFLEAGRRVMALAKRYYHQDDESALPRNIANFKAFENAMTLDIAMGGSSNTVLHLLAAAQEADVDFTMADIDRMSRLVPHLCKVAPSTPKYHMEDVHRAGGVMGILGELDRTGLLHTDVFHVAADNDGTPGSGTLKSVLAQYDVMQTQDEKVKHFFMAGPAGIPTTKAFSQDCRWPSLDNDRQEGCIRSREFAFSQEGGLAVLSGNVAENGCIVKTAGVDESNLTFVGSARVYESQDDAVAGILGGEVVAGDVVVIRYEGPKGGPGMQEMLYPTSYLKSRGLGKACALITDGRFSGGTSGLSIGHVSPEAAAGGTIALIENGDRIEIDIPKRSIKLAVSDVELNARREKMHSLGPMAWKPIGRQRYVSLALKAYAMLATSADKGAVRDRSKLED.

Asp81 is a Mg(2+) binding site. Residue Cys122 participates in [2Fe-2S] cluster binding. Mg(2+)-binding residues include Asp123 and Lys124. Lys124 carries the post-translational modification N6-carboxylysine. Cys195 provides a ligand contact to [2Fe-2S] cluster. Residue Glu499 participates in Mg(2+) binding. The active-site Proton acceptor is Ser525.

This sequence belongs to the IlvD/Edd family. In terms of assembly, homodimer. Requires [2Fe-2S] cluster as cofactor. Mg(2+) is required as a cofactor.

The enzyme catalyses (2R)-2,3-dihydroxy-3-methylbutanoate = 3-methyl-2-oxobutanoate + H2O. It catalyses the reaction (2R,3R)-2,3-dihydroxy-3-methylpentanoate = (S)-3-methyl-2-oxopentanoate + H2O. The protein operates within amino-acid biosynthesis; L-isoleucine biosynthesis; L-isoleucine from 2-oxobutanoate: step 3/4. It functions in the pathway amino-acid biosynthesis; L-valine biosynthesis; L-valine from pyruvate: step 3/4. Its function is as follows. Functions in the biosynthesis of branched-chain amino acids. Catalyzes the dehydration of (2R,3R)-2,3-dihydroxy-3-methylpentanoate (2,3-dihydroxy-3-methylvalerate) into 2-oxo-3-methylpentanoate (2-oxo-3-methylvalerate) and of (2R)-2,3-dihydroxy-3-methylbutanoate (2,3-dihydroxyisovalerate) into 2-oxo-3-methylbutanoate (2-oxoisovalerate), the penultimate precursor to L-isoleucine and L-valine, respectively. This is Dihydroxy-acid dehydratase from Shewanella baltica (strain OS155 / ATCC BAA-1091).